The sequence spans 557 residues: Leucine-rich glioma-inactivated protein 1 (557 aa).

The N-terminal stretch at 1–34 (MESESSRRMGNACIPLKRIAYFLCLFSVVLLTEG) is a signal peptide. The 38-residue stretch at 35-72 (KKPAKPKCPAVCTCSKDNALCENARSIPRTVPPDVISL) folds into the LRRNT domain. LRR repeat units follow at residues 92 to 113 (SLQLLLFTSNSFDVISDDAFIG), 116 to 137 (HLEYLFIENNNIKSISRHTFRG), and 140 to 161 (SLIHLSLANNNLQTLPKDIFKG). In terms of domain architecture, LRRCT spans 173-223 (NAFNCDCKLKWLVEWLGHTNATVEDIYCEGPPEYKKRKINSLSPKDFDCII). Asparagine 192 carries N-linked (GlcNAc...) asparagine glycosylation. EAR repeat units lie at residues 225–267 (EFAK…EWDH), 271–313 (TFRN…KRDG), 317–364 (KFIK…KWNG), 366–415 (GFYS…QWSK), 419–462 (LFTN…KWGG), 464–506 (SFQD…NWDA), and 510–552 (KFVK…KHVI). Asparagine 277 carries an N-linked (GlcNAc...) asparagine glycan. Asparagine 422 is a glycosylation site (N-linked (GlcNAc...) asparagine).

As to quaternary structure, oligomer. Interacts with KCNA1 within a complex containing KCNA1, KCNA4 and KCNAB1. Part of a complex containing ADAM22, DLG4/PSD95 and CACNG2 (stargazin). Can bind to ADAM11 and ADAM23. Post-translationally, glycosylated. Expressed in the brain (at protein level). Expressed in cerebellar cortex basket cell terminals (at protein level). Highly expressed in the dentate gyrus and CA3 field of the hippocampus.

Its subcellular location is the secreted. It localises to the synapse. The protein resides in the cytoplasm. The protein localises to the golgi apparatus. It is found in the endoplasmic reticulum. Functionally, regulates voltage-gated potassium channels assembled from KCNA1, KCNA4 and KCNAB1. It slows down channel inactivation by precluding channel closure mediated by the KCNAB1 subunit. Ligand for ADAM22 that positively regulates synaptic transmission mediated by AMPA-type glutamate receptors. Plays a role in suppressing the production of MMP1/3 through the phosphatidylinositol 3-kinase/ERK pathway. This is Leucine-rich glioma-inactivated protein 1 from Mus musculus (Mouse).